Reading from the N-terminus, the 288-residue chain is Hydroxyethylthiazole kinase (288 aa).

M55 contributes to the substrate binding site. ATP is bound by residues N131 and S177. Substrate is bound at residue G204.

Belongs to the Thz kinase family. Mg(2+) serves as cofactor.

It catalyses the reaction 5-(2-hydroxyethyl)-4-methylthiazole + ATP = 4-methyl-5-(2-phosphooxyethyl)-thiazole + ADP + H(+). It participates in cofactor biosynthesis; thiamine diphosphate biosynthesis; 4-methyl-5-(2-phosphoethyl)-thiazole from 5-(2-hydroxyethyl)-4-methylthiazole: step 1/1. Catalyzes the phosphorylation of the hydroxyl group of 4-methyl-5-beta-hydroxyethylthiazole (THZ). In Haloquadratum walsbyi (strain DSM 16790 / HBSQ001), this protein is Hydroxyethylthiazole kinase.